A 165-amino-acid chain; its full sequence is uncharacterized protein (165 aa).

Residues 53-123 form a disordered region; the sequence is CSEKTGSAPN…PAPSSGRQGG (71 aa). Residues 58 to 71 are compositionally biased toward low complexity; sequence GSAPNPGSSAPAPA.

This is an uncharacterized protein from Treponema pallidum (strain Nichols).